The following is a 133-amino-acid chain: Holo-[acyl-carrier-protein] synthase (133 aa).

2 residues coordinate Mg(2+): aspartate 8 and glutamate 57.

Belongs to the P-Pant transferase superfamily. AcpS family. Mg(2+) is required as a cofactor.

The protein resides in the cytoplasm. It catalyses the reaction apo-[ACP] + CoA = holo-[ACP] + adenosine 3',5'-bisphosphate + H(+). In terms of biological role, transfers the 4'-phosphopantetheine moiety from coenzyme A to a Ser of acyl-carrier-protein. The chain is Holo-[acyl-carrier-protein] synthase from Bartonella tribocorum (strain CIP 105476 / IBS 506).